We begin with the raw amino-acid sequence, 324 residues long: Elongation factor P--(R)-beta-lysine ligase (324 aa).

75-77 (SPE) contacts substrate. Residues 99–101 (RNK) and Asn-108 each bind ATP. Tyr-117 is a binding site for substrate. 243 to 244 (EL) lines the ATP pocket. Residue Glu-250 coordinates substrate. Residue Gly-299 coordinates ATP.

Belongs to the class-II aminoacyl-tRNA synthetase family. EpmA subfamily. Homodimer.

The enzyme catalyses D-beta-lysine + L-lysyl-[protein] + ATP = N(6)-((3R)-3,6-diaminohexanoyl)-L-lysyl-[protein] + AMP + diphosphate + H(+). In terms of biological role, with EpmB is involved in the beta-lysylation step of the post-translational modification of translation elongation factor P (EF-P). Catalyzes the ATP-dependent activation of (R)-beta-lysine produced by EpmB, forming a lysyl-adenylate, from which the beta-lysyl moiety is then transferred to the epsilon-amino group of a conserved specific lysine residue in EF-P. The sequence is that of Elongation factor P--(R)-beta-lysine ligase from Buchnera aphidicola subsp. Acyrthosiphon pisum (strain 5A).